The sequence spans 400 residues: Phosphoglycerate kinase (400 aa).

Substrate contacts are provided by residues 21 to 23 (DFN), Arg37, 60 to 63 (HLGR), Arg121, and Arg154. ATP contacts are provided by residues Lys204, Glu326, and 355–358 (GGDS).

This sequence belongs to the phosphoglycerate kinase family. Monomer.

It is found in the cytoplasm. It catalyses the reaction (2R)-3-phosphoglycerate + ATP = (2R)-3-phospho-glyceroyl phosphate + ADP. It participates in carbohydrate degradation; glycolysis; pyruvate from D-glyceraldehyde 3-phosphate: step 2/5. This chain is Phosphoglycerate kinase, found in Chloroflexus aurantiacus (strain ATCC 29366 / DSM 635 / J-10-fl).